The chain runs to 412 residues: Class E basic helix-loop-helix protein 40 (412 aa).

The interval 1 to 139 is essential for interaction with BMAL1, E-box binding and repressor activity against the CLOCK-BMAL1 heterodimer; it reads MERIPSAQPP…LSGRNVETGQ (139 aa). Residues 52–107 form the bHLH domain; the sequence is TYKLPHRLIEKKRRDRINECIAQLKDLLPEHLKLTTLGHLEKAVVLELTLKHVKAL. The tract at residues 75–79 is necessary for interaction with RXRA and repressor activity against RXRA; sequence LKDLL. In terms of domain architecture, Orange spans 142–175; the sequence is FCSGFQTCAREVLQYLAKHENTRDLKSSQLVTHL. Lys-159 is covalently cross-linked (Glycyl lysine isopeptide (Lys-Gly) (interchain with G-Cter in SUMO1, SUMO2 and SUMO3)). A Glycyl lysine isopeptide (Lys-Gly) (interchain with G-Cter in SUMO2) cross-link involves residue Lys-167. The disordered stretch occupies residues 182–303; the sequence is LLQGGTSRKP…LSDDEGHFTS (122 aa). At Ser-235 the chain carries Phosphoserine. Basic and acidic residues predominate over residues 248-271; it reads ESEKGDLRSEQPCFKSDHGRRFTM. A Glycyl lysine isopeptide (Lys-Gly) (interchain with G-Cter in SUMO1); alternate cross-link involves residue Lys-279. Lys-279 participates in a covalent cross-link: Glycyl lysine isopeptide (Lys-Gly) (interchain with G-Cter in SUMO1, SUMO2 and SUMO3); alternate. A Glycyl lysine isopeptide (Lys-Gly) (interchain with G-Cter in SUMO2); alternate cross-link involves residue Lys-279. Lys-288 is covalently cross-linked (Glycyl lysine isopeptide (Lys-Gly) (interchain with G-Cter in SUMO2)). Ser-383 is modified (phosphoserine).

As to quaternary structure, homodimer. Heterodimer with BHLHE41/DEC2. Interacts with TCF3/E47. Interacts with ubiquitin-conjugating enzyme UBE2I/UBC9. Interacts with HDAC1, SUMO1, RXRA and BMAL1. Ubiquitinated; which may lead to proteasomal degradation. Post-translationally, sumoylation inhibits its ubiquitination and promotes its negative regulation of the CLOCK-BMAL1 heterodimer transcriptional activator activity. In terms of tissue distribution, expressed in cartilage, spleen, intestine, lung, and to a lesser extent in heart, brain, liver, muscle and stomach.

The protein localises to the cytoplasm. It localises to the nucleus. Functionally, transcriptional repressor involved in the regulation of the circadian rhythm by negatively regulating the activity of the clock genes and clock-controlled genes. Acts as the negative limb of a novel autoregulatory feedback loop (DEC loop) which differs from the one formed by the PER and CRY transcriptional repressors (PER/CRY loop). Both these loops are interlocked as it represses the expression of PER1/2 and in turn is repressed by PER1/2 and CRY1/2. Represses the activity of the circadian transcriptional activator: CLOCK-BMAL1|BMAL2 heterodimer by competing for the binding to E-box elements (5'-CACGTG-3') found within the promoters of its target genes. Negatively regulates its own expression and the expression of DBP and BHLHE41/DEC2. Acts as a corepressor of RXR and the RXR-LXR heterodimers and represses the ligand-induced RXRA and NR1H3/LXRA transactivation activity. May be involved in the regulation of chondrocyte differentiation via the cAMP pathway. Represses the transcription of NR0B2 and attentuates the transactivation of NR0B2 by the CLOCK-BMAL1 complex. Drives the circadian rhythm of blood pressure through transcriptional repression of ATP1B1 in the cardiovascular system. The sequence is that of Class E basic helix-loop-helix protein 40 (BHLHE40) from Homo sapiens (Human).